The primary structure comprises 198 residues: MKIIVATRNAGKVGEFQAMLGRLGYDVESLLDYDTAPETEETGSTFEENAELKSKEAAAYFGHAVLSDDSGLEVDALDGAPGVYSARFAGEDKSDAANNALLLEKLADTPADRRTARFVCALSLAKPSGETLTVRGTMEGQIGFEQKGTNGFGYDPLFLIPSLNQTAAELTKSEKAAISHRGQALKKLEAALTTFLGE.

7–12 (TRNAGK) contributes to the substrate binding site. Mg(2+)-binding residues include E40 and D69. D69 (proton acceptor) is an active-site residue. Substrate-binding positions include S70, 152-155 (FGYD), K175, and 180-181 (HR).

This sequence belongs to the HAM1 NTPase family. In terms of assembly, homodimer. Mg(2+) serves as cofactor.

It catalyses the reaction XTP + H2O = XMP + diphosphate + H(+). The enzyme catalyses dITP + H2O = dIMP + diphosphate + H(+). It carries out the reaction ITP + H2O = IMP + diphosphate + H(+). In terms of biological role, pyrophosphatase that catalyzes the hydrolysis of nucleoside triphosphates to their monophosphate derivatives, with a high preference for the non-canonical purine nucleotides XTP (xanthosine triphosphate), dITP (deoxyinosine triphosphate) and ITP. Seems to function as a house-cleaning enzyme that removes non-canonical purine nucleotides from the nucleotide pool, thus preventing their incorporation into DNA/RNA and avoiding chromosomal lesions. This Exiguobacterium sibiricum (strain DSM 17290 / CCUG 55495 / CIP 109462 / JCM 13490 / 255-15) protein is dITP/XTP pyrophosphatase.